The following is a 164-amino-acid chain: FMN reductase (NADH) RutF (164 aa).

It belongs to the non-flavoprotein flavin reductase family. RutF subfamily.

The enzyme catalyses FMNH2 + NAD(+) = FMN + NADH + 2 H(+). Catalyzes the reduction of FMN to FMNH2 which is used to reduce pyrimidine by RutA via the Rut pathway. The protein is FMN reductase (NADH) RutF of Shigella flexneri serotype X (strain 2002017).